The following is a 52-amino-acid chain: Inducible serine protease inhibitor 2 (52 aa).

Residues 5–52 form the BPTI/Kunitz inhibitor domain; it reads CTLPLETGICRAELHRFGYDTKLKECTQFVYGGCHHNENNFKKLEVCR. 2 disulfide bridges follow: Cys-14–Cys-38 and Cys-30–Cys-51.

Inhibits trypsin and the toxin protease PR2 of M.anisopliae. Does not inhibit chymotrypsin, subtilisin Carlsberg, proteinase K, porcine pancreatic elastase and the toxin protease PR1 of M.anisopliae. The sequence is that of Inducible serine protease inhibitor 2 from Galleria mellonella (Greater wax moth).